The sequence spans 892 residues: Isoleucine--tRNA ligase (892 aa).

Residues 60–70 (PYANGSIHIGH) carry the 'HIGH' region motif. Glu552 serves as a coordination point for L-isoleucyl-5'-AMP. Positions 593-597 (KMSKS) match the 'KMSKS' region motif. Lys596 is a binding site for ATP. Positions 862, 865, 879, and 882 each coordinate Zn(2+).

This sequence belongs to the class-I aminoacyl-tRNA synthetase family. IleS type 1 subfamily. Monomer. Requires Zn(2+) as cofactor.

The protein resides in the cytoplasm. The enzyme catalyses tRNA(Ile) + L-isoleucine + ATP = L-isoleucyl-tRNA(Ile) + AMP + diphosphate. In terms of biological role, catalyzes the attachment of isoleucine to tRNA(Ile). As IleRS can inadvertently accommodate and process structurally similar amino acids such as valine, to avoid such errors it has two additional distinct tRNA(Ile)-dependent editing activities. One activity is designated as 'pretransfer' editing and involves the hydrolysis of activated Val-AMP. The other activity is designated 'posttransfer' editing and involves deacylation of mischarged Val-tRNA(Ile). The protein is Isoleucine--tRNA ligase of Mycoplasmopsis agalactiae (strain NCTC 10123 / CIP 59.7 / PG2) (Mycoplasma agalactiae).